A 605-amino-acid polypeptide reads, in one-letter code: Ankyrin repeat domain-containing protein 13D (605 aa).

ANK repeat units follow at residues 39-68 and 72-101; these read RGRTPLELAVSLGNLESVRVLLRHNANVGK and QGWAVLQEAVSTGDPEMVQLVLQYRDYQRA. Residues 306–333 are disordered; the sequence is AQQHSSHTGAPVQQAASPTNPTAISPEE. Residues 319–328 show a composition bias toward polar residues; sequence QAASPTNPTA. UIM domains follow at residues 482-501 and 528-547; these read EDDDLLQFAIQQSLLEAGTE and EEQLQLERALQESLQLSTEP. Residues 541–605 are disordered; it reads LQLSTEPRGP…RILQLSLTEH (65 aa). Over residues 550-563 the composition is skewed to pro residues; the sequence is PGSPPRTPPAPGPP. Residue serine 552 is modified to Phosphoserine. Threonine 556 is modified (phosphothreonine). Over residues 564–575 the composition is skewed to low complexity; sequence SFEEQLRLALEL. 2 consecutive UIM domains span residues 564–583 and 589–605; these read SFEEQLRLALELSSREQEER and QEEEDLQRILQLSLTEH. Over residues 576–589 the composition is skewed to basic and acidic residues; sequence SSREQEERERRGQQ.

In terms of assembly, interacts with EGFR (ubiquitinated); the interaction is direct and may regulate EGFR internalization.

The protein resides in the cell membrane. It is found in the late endosome. Ubiquitin-binding protein that specifically recognizes and binds 'Lys-63'-linked ubiquitin. Does not bind 'Lys-48'-linked ubiquitin. Positively regulates the internalization of ligand-activated EGFR by binding to the Ub moiety of ubiquitinated EGFR at the cell membrane. The sequence is that of Ankyrin repeat domain-containing protein 13D (ANKRD13D) from Homo sapiens (Human).